Consider the following 251-residue polypeptide: GTP cyclohydrolase 1 type 2 homolog (251 aa).

His63, His64, Asp101, His219, and Glu223 together coordinate a divalent metal cation.

The protein belongs to the GTP cyclohydrolase I type 2/NIF3 family. In terms of assembly, homohexamer.

The sequence is that of GTP cyclohydrolase 1 type 2 homolog from Pasteurella multocida (strain Pm70).